Reading from the N-terminus, the 172-residue chain is MDLKSLIRDIPDFPKPGIVFRDITTLLNHPQGLRYTIDTLTAKCRDYGLSPDYIVGMESRGFLFGVPLAYQLEAGFIPVRKPGKLPAAVHSIEYDLEYGSDSLEIHQDAVASHHKVLIVDDLIATGGTAKATAGLLEKIGCEVLGFAFIIELIDLGGREKLPDLPIITLIDY.

The protein belongs to the purine/pyrimidine phosphoribosyltransferase family. In terms of assembly, homodimer.

The protein localises to the cytoplasm. It catalyses the reaction AMP + diphosphate = 5-phospho-alpha-D-ribose 1-diphosphate + adenine. It functions in the pathway purine metabolism; AMP biosynthesis via salvage pathway; AMP from adenine: step 1/1. Its function is as follows. Catalyzes a salvage reaction resulting in the formation of AMP, that is energically less costly than de novo synthesis. This Microcystis aeruginosa (strain NIES-843 / IAM M-2473) protein is Adenine phosphoribosyltransferase.